We begin with the raw amino-acid sequence, 99 residues long: MSRVCELTGKAVLTGNNVSHANNKTKRRFLPNLCQVTLISDALNQRYRLRVSAAALRSVEHRGGLDAFLLKASENELSMRARLLRRQIVKKTAEAAVAA.

Belongs to the bacterial ribosomal protein bL28 family.

The chain is Large ribosomal subunit protein bL28 from Rhizobium etli (strain CIAT 652).